A 591-amino-acid polypeptide reads, in one-letter code: ATPase family AAA domain-containing protein 3A (591 aa).

The segment at 1–52 (MSWLFGIKGPKGEGTGPPLPLPPAQPGAESGGDRGAGDRPSPKDKWSNFDPT) is disordered. The residue at position 2 (S2) is an N-acetylserine. Residues 2-49 (SWLFGIKGPKGEGTGPPLPLPPAQPGAESGGDRGAGDRPSPKDKWSNF) are required for interaction with the inner surface of the mitochondrial outer membrane. The Mitochondrial intermembrane portion of the chain corresponds to 2 to 245 (SWLFGIKGPK…FRAFVTDWDK (244 aa)). Positions 31-47 (GGDRGAGDRPSPKDKWS) are enriched in basic and acidic residues. Residues 55 to 216 (ERAAKAAREL…REQIRLKAAE (162 aa)) adopt a coiled-coil conformation. Residues 246 to 263 (VTATVAGLTLLAVGVYSA) form a helical membrane-spanning segment. Topologically, residues 264–591 (KNATSVAGRY…KPPHPSLLSC (328 aa)) are mitochondrial matrix. An S100B-binding region spans residues 289 to 304 (RISVLEALRHPIQVSR). Position 351-358 (351-358 (GPPGTGKT)) interacts with ATP. The residue at position 490 (K490) is an N6-acetyllysine; alternate. K490 carries the N6-succinyllysine; alternate modification. 2 positions are modified to N6-acetyllysine: K494 and K512.

The protein belongs to the AAA ATPase family. Can form homooligomers. Homodimer formation at the N-terminus may be regulated by ATP and is required for the interaction with the inner surface of the mitochondrial outer membrane and correct mitochondrial homeostasis. Interacts with components of the mitochondrial ribosome and with other proteins involved in mitochondrial RNA metabolism. May also interact with protein involved in lipid metabolism, including STARD9. May interact with FAM210A. Interacts with GADD45GIP1. Interacts with S100B in a Ca(+2)- and Zn(+2)-dependent manner; this interaction probably occurs in the cytosol prior to mitochondrial targeting. S100B could assist ATAD3A cytoplasmic processing, preventing aggregation and favoring mitochondrial localization. Interacts with HSP60/HSPD1. Interacts with CLPB. Interacts with EIF2AK3/PERK; ATAD3A and EIF2S1/eIF-2-alpha occupy a common binding site within the cytoplasmic loop of EIF2AK3/PERK, leading to prevent EIF2AK3/PERK association with its substrate EIF2S1/eIF-2-alpha.

It is found in the mitochondrion inner membrane. It localises to the mitochondrion matrix. The protein resides in the mitochondrion nucleoid. It carries out the reaction ATP + H2O = ADP + phosphate + H(+). Its function is as follows. Essential for mitochondrial network organization, mitochondrial metabolism and cell growth at organism and cellular level. May play an important role in mitochondrial protein synthesis. May also participate in mitochondrial DNA replication. May bind to mitochondrial DNA D-loops and contribute to nucleoid stability. Required for enhanced channeling of cholesterol for hormone-dependent steroidogenesis. Involved in mitochondrial-mediated antiviral innate immunity. Required to protect mitochondria from the PERK-mediated unfolded protein response: specifically inhibits the activity of EIF2AK3/PERK at mitochondria-endoplasmic reticulum contact sites, thereby providing a safe haven for mitochondrial protein translation during endoplasmic reticulum stress. Ability to inhibit EIF2AK3/PERK is independent of its ATPase activity. Also involved in the mitochondrial DNA damage response by promoting signaling between damaged genomes and the mitochondrial membrane, leading to activation of the integrated stress response (ISR). The sequence is that of ATPase family AAA domain-containing protein 3A (Atad3a) from Rattus norvegicus (Rat).